A 68-amino-acid polypeptide reads, in one-letter code: DNA-directed RNA polymerase subunit omega (68 aa).

It belongs to the RNA polymerase subunit omega family. As to quaternary structure, the RNAP catalytic core consists of 2 alpha, 1 beta, 1 beta' and 1 omega subunit. When a sigma factor is associated with the core the holoenzyme is formed, which can initiate transcription.

It carries out the reaction RNA(n) + a ribonucleoside 5'-triphosphate = RNA(n+1) + diphosphate. Promotes RNA polymerase assembly. Latches the N- and C-terminal regions of the beta' subunit thereby facilitating its interaction with the beta and alpha subunits. This Listeria monocytogenes serotype 4b (strain CLIP80459) protein is DNA-directed RNA polymerase subunit omega.